Here is a 114-residue protein sequence, read N- to C-terminus: Beta-microseminoprotein (114 aa).

An N-terminal signal peptide occupies residues 1-20; the sequence is MNVLLGGFVIFATFVTLCNA. 5 disulfide bridges follow: Cys22/Cys70, Cys38/Cys62, Cys57/Cys93, Cys60/Cys69, and Cys84/Cys107.

It belongs to the beta-microseminoprotein family. Homodimer; Interacts with PI16.

It is found in the secreted. In Papio anubis (Olive baboon), this protein is Beta-microseminoprotein (MSMB).